Reading from the N-terminus, the 462-residue chain is Argininosuccinate lyase (462 aa).

The protein belongs to the lyase 1 family. Argininosuccinate lyase subfamily.

The protein resides in the cytoplasm. It catalyses the reaction 2-(N(omega)-L-arginino)succinate = fumarate + L-arginine. It functions in the pathway amino-acid biosynthesis; L-arginine biosynthesis; L-arginine from L-ornithine and carbamoyl phosphate: step 3/3. This is Argininosuccinate lyase from Bacillus cereus (strain ATCC 10987 / NRS 248).